The primary structure comprises 315 residues: 2-oxoglutarate and iron-dependent oxygenase domain-containing protein 3 (315 aa).

Residues 1–31 (MAPQRRGPPRIPEGSSAAERRRATSTKKDRL) form a disordered region. Over 1–41 (MAPQRRGPPRIPEGSSAAERRRATSTKKDRLPREAQRTWLR) the chain is Cytoplasmic. Positions 18 to 31 (AERRRATSTKKDRL) are enriched in basic and acidic residues. Residues 42 to 62 (IVAFGVGLALVTCLLWSSVGI) form a helical; Signal-anchor for type II membrane protein membrane-spanning segment. The Lumenal segment spans residues 63-315 (DDDVAEVVAR…DHGIEDPVLT (253 aa)). The Fe2OG dioxygenase domain occupies 203 to 305 (KPTFFSRINS…AITIAFTCNP (103 aa)). N-linked (GlcNAc...) asparagine glycosylation is present at Asn211. Fe cation-binding residues include His226 and Asp228. Asn263 carries N-linked (GlcNAc...) asparagine glycosylation. His284 is a Fe cation binding site. Arg294 is a catalytic residue. Arg294 contacts 2-oxoglutarate.

The protein belongs to the OGFOD3 family. Requires Fe(2+) as cofactor. L-ascorbate is required as a cofactor.

Its subcellular location is the membrane. In Mus musculus (Mouse), this protein is 2-oxoglutarate and iron-dependent oxygenase domain-containing protein 3 (Ogfod3).